Reading from the N-terminus, the 159-residue chain is Ribosomal RNA large subunit methyltransferase H (159 aa).

S-adenosyl-L-methionine-binding positions include L76, G108, and 127–132; that span reads FSKMTF.

Belongs to the RNA methyltransferase RlmH family. As to quaternary structure, homodimer.

The protein resides in the cytoplasm. The catalysed reaction is pseudouridine(1915) in 23S rRNA + S-adenosyl-L-methionine = N(3)-methylpseudouridine(1915) in 23S rRNA + S-adenosyl-L-homocysteine + H(+). Specifically methylates the pseudouridine at position 1915 (m3Psi1915) in 23S rRNA. This chain is Ribosomal RNA large subunit methyltransferase H, found in Bacillus subtilis (strain 168).